A 73-amino-acid chain; its full sequence is Photosystem I reaction center subunit IV (73 aa).

This sequence belongs to the PsaE family.

It localises to the cellular thylakoid membrane. In terms of biological role, stabilizes the interaction between PsaC and the PSI core, assists the docking of the ferredoxin to PSI and interacts with ferredoxin-NADP oxidoreductase. This is Photosystem I reaction center subunit IV from Synechococcus sp. (strain JA-3-3Ab) (Cyanobacteria bacterium Yellowstone A-Prime).